A 471-amino-acid chain; its full sequence is POU domain protein 2 (471 aa).

The segment covering 1 to 18 (CGKSYEEEEEEEDDELEA) has biased composition (acidic residues). 2 disordered regions span residues 1–32 (CGKSYEEEEEEEDDELEADVAQNLSSKRSARQ) and 149–238 (DQQL…PKPL). Low complexity predominate over residues 165–180 (STPLSKSPLRSPSLSP). The segment covering 186-196 (EPQQAQRTPPN) has biased composition (polar residues). The span at 197 to 230 (SLAAAGLGLSSAVLTPNTPSMQQQQQQTMTSTTN) shows a compositional bias: low complexity. In terms of domain architecture, POU-specific spans 257–331 (EETTDLEELE…LLQKWLEDAD (75 aa)). Residues 362–421 (RRKKRTSIETTIRGALEQAFVLNCKPTSEEINQLSERLHMDKEVVRVWFCNRRQKEKRIN) constitute a DNA-binding region (homeobox).

Belongs to the POU transcription factor family. Class-2 subfamily.

Its subcellular location is the nucleus. In terms of biological role, DNA-binding regulatory protein implicated in early development. Involved in neuronal cell fate decision. May act as an octamer-dependent activator of transcription. The polypeptide is POU domain protein 2 (pdm2) (Drosophila virilis (Fruit fly)).